Reading from the N-terminus, the 362-residue chain is MSQTIDELLIPHRNAIDTIDAEILRLLNERAQHAHAIGELKGTGAVYRPEREVAVLRRIQDLNKGPLPDESVARLFREVMSECLAVERPLTIAYLGPQGTFTQQAAIKHFGHAAHTMACPTIDDCFKQVETRQADYLVAPVENSTEGSVGRTLDLLAVTALQACGEVVLRIHHNLLRKNNGSTEGIAKVFSHAQALAQCNDWLGRRLPNAERIAVSSNAEAARLVAESDDGTVAAIAGRTAAEIYGLDMVAECIEDEPNNTTRFLVMGHHETGASGSDKTSLAVSAPNRAGAVASLLQPLTESGISMTKFESRPSKSVLWEYLFFIDIEGHRRDAQIQTALERLGERASFVKAIGSYPTAVL.

The 89-residue stretch at glutamine 3–threonine 91 folds into the Chorismate mutase domain. Substrate-binding residues include arginine 13, arginine 30, lysine 41, and glutamate 52. One can recognise a Prephenate dehydratase domain in the interval isoleucine 92–histidine 269. The region spanning serine 281–serine 356 is the ACT domain.

It localises to the cytoplasm. The enzyme catalyses chorismate = prephenate. The catalysed reaction is prephenate + H(+) = 3-phenylpyruvate + CO2 + H2O. It functions in the pathway amino-acid biosynthesis; L-phenylalanine biosynthesis; phenylpyruvate from prephenate: step 1/1. Its pathway is metabolic intermediate biosynthesis; prephenate biosynthesis; prephenate from chorismate: step 1/1. Its function is as follows. Catalyzes the Claisen rearrangement of chorismate to prephenate and the decarboxylation/dehydration of prephenate to phenylpyruvate. The protein is Bifunctional chorismate mutase/prephenate dehydratase (pheA) of Neisseria gonorrhoeae (strain ATCC 700825 / FA 1090).